The sequence spans 95 residues: uncharacterized protein (95 aa).

2 stretches are compositionally biased toward basic and acidic residues: residues 1 to 28 (MRRAEVKRSAHGPADEKAQTGSPRKERC) and 41 to 53 (DERVPSDPEKGRP). A disordered region spans residues 1-73 (MRRAEVKRSA…RTSRAGSSWQ (73 aa)).

This is an uncharacterized protein from Homo sapiens (Human).